The primary structure comprises 79 residues: Protein VdcD (79 aa).

Its function is as follows. Involved in the non-oxidative decarboxylation and detoxification of phenolic derivatives under both aerobic and anaerobic conditions, however the precise biochemical function of VdcD in metabolism of phenolic acid is unknown. The chain is Protein VdcD from Streptomyces sp. (strain D7).